Here is a 301-residue protein sequence, read N- to C-terminus: tRNA dimethylallyltransferase (301 aa).

5 to 12 (GPTASGKS) provides a ligand contact to ATP. A substrate-binding site is contributed by 7-12 (TASGKS). An interaction with substrate tRNA region spans residues 30 to 33 (DSMQ).

This sequence belongs to the IPP transferase family. As to quaternary structure, monomer. Requires Mg(2+) as cofactor.

The enzyme catalyses adenosine(37) in tRNA + dimethylallyl diphosphate = N(6)-dimethylallyladenosine(37) in tRNA + diphosphate. Functionally, catalyzes the transfer of a dimethylallyl group onto the adenine at position 37 in tRNAs that read codons beginning with uridine, leading to the formation of N6-(dimethylallyl)adenosine (i(6)A). This chain is tRNA dimethylallyltransferase, found in Rhodopseudomonas palustris (strain TIE-1).